The chain runs to 275 residues: Diaminopimelate epimerase (275 aa).

Residues Asn-20 and Asn-63 each contribute to the substrate site. Cys-72 functions as the Proton donor in the catalytic mechanism. Residues 73-74 (GN), Asn-179, and 197-198 (ER) contribute to the substrate site. Cys-207 acts as the Proton acceptor in catalysis. 208–209 (GT) contributes to the substrate binding site.

Belongs to the diaminopimelate epimerase family. In terms of assembly, homodimer.

The protein resides in the cytoplasm. It catalyses the reaction (2S,6S)-2,6-diaminopimelate = meso-2,6-diaminopimelate. The protein operates within amino-acid biosynthesis; L-lysine biosynthesis via DAP pathway; DL-2,6-diaminopimelate from LL-2,6-diaminopimelate: step 1/1. Catalyzes the stereoinversion of LL-2,6-diaminopimelate (L,L-DAP) to meso-diaminopimelate (meso-DAP), a precursor of L-lysine and an essential component of the bacterial peptidoglycan. This Chlamydia trachomatis serovar L2 (strain ATCC VR-902B / DSM 19102 / 434/Bu) protein is Diaminopimelate epimerase.